We begin with the raw amino-acid sequence, 526 residues long: Lysine--tRNA ligase (526 aa).

Residues E431 and E438 each coordinate Mg(2+).

It belongs to the class-II aminoacyl-tRNA synthetase family. As to quaternary structure, homodimer. It depends on Mg(2+) as a cofactor.

The protein resides in the cytoplasm. The catalysed reaction is tRNA(Lys) + L-lysine + ATP = L-lysyl-tRNA(Lys) + AMP + diphosphate. The protein is Lysine--tRNA ligase of Chlamydia trachomatis serovar L2b (strain UCH-1/proctitis).